The primary structure comprises 943 residues: Glutamate receptor ionotropic, NMDA 1 (943 aa).

A signal peptide spans 1 to 20 (MSTMRLLTLALLFSCSFARA). At 21-580 (ACDPKIVNIG…TLDSFMQPFQ (560 aa)) the chain is on the extracellular side. N-linked (GlcNAc...) asparagine glycosylation is found at asparagine 61, asparagine 224, asparagine 260, asparagine 297, asparagine 321, asparagine 371, asparagine 389, asparagine 461, asparagine 492, and asparagine 512. A disulfide bond links cysteine 79 and cysteine 329. Intrachain disulfides connect cysteine 441/cysteine 475 and cysteine 457/cysteine 476. Residues proline 537, threonine 539, and arginine 544 each contribute to the glycine site. Residues 581–601 (STLWLLVGLSVHVVAVMLYLL) traverse the membrane as a helical segment. Topologically, residues 602 to 623 (DRFSPFGRFKVNSEEEEEDALT) are cytoplasmic. An intramembrane region (discontinuously helical) is located at residues 624–645 (LSSAMWFSWGVLLNSGIGEGAP). Residues 624–645 (LSSAMWFSWGVLLNSGIGEGAP) form a pore-forming region. Over 646–651 (RSFSAR) the chain is Cytoplasmic. A helical transmembrane segment spans residues 652 to 668 (ILGMVWAGFAMIIVASY). The Extracellular segment spans residues 669 to 833 (TANLAAFLVL…NAPATLTFEN (165 aa)). An N-linked (GlcNAc...) asparagine glycan is attached at asparagine 695. Residues serine 709 and aspartate 753 each coordinate glycine. Cysteine 765 and cysteine 819 form a disulfide bridge. N-linked (GlcNAc...) asparagine glycosylation is present at asparagine 792. The helical transmembrane segment at 834 to 854 (MAGVFMLVAGGIVAGIFLIFI) threads the bilayer. At 855-943 (EIAYKRHKDA…LSDPSVSTVV (89 aa)) the chain is on the cytoplasmic side. Phosphoserine is present on residues serine 910, serine 911, serine 917, and serine 918.

This sequence belongs to the glutamate-gated ion channel (TC 1.A.10.1) family. NR1/GRIN1 subfamily. In terms of assembly, heterotetramer; the NMDAR subunits are modular and harbor tiered domains that function in concert to regulate opening and closing of the cation-selective ion channel pore. Forms heterotetrameric channels composed of two GluN1/zeta subunits (GRIN1), and two identical GluN2/epsilon subunits (GRIN2A, GRIN2B, GRIN2C or GRIN2D) or GluN3 subunits (GRIN3A or GRIN3B) (in vitro). Can also form heterotetrameric channels that contain at least two GluN1 subunits and at least two different GluN2 subunits (or a combination of one GluN2 and one GluN3 subunits) (in vitro). In vivo, the subunit composition may vary in function of the expression levels of the different subunits. Found in a complex with GRIN2A or GRIN2B, GRIN3A and PPP2CB. Found in a complex with GRIN2A or GRIN2B and GRIN3B. Interacts with SNX27 (via PDZ domain); the interaction is required for recycling to the plasma membrane when endocytosed and prevent degradation in lysosomes. Interacts with DLG4 and MPDZ. Interacts with LRFN1 and LRFN2. Interacts with MYZAP. Found in a complex with DLG4 and PRR7. Found in a complex with GRIN2B and PRR7. Interacts with PRR7; the interaction is reduced following NMDA receptor activity. In terms of processing, NMDA is probably regulated by C-terminal phosphorylation of an isoform of GRIN1 by PKC. Dephosphorylated on Ser-897 probably by protein phosphatase 2A (PPP2CB). Its phosphorylated state is influenced by the formation of the NMDAR-PPP2CB complex and the NMDAR channel activity.

It localises to the cell membrane. Its subcellular location is the postsynaptic cell membrane. It is found in the postsynaptic density membrane. The protein localises to the synaptic cell membrane. The catalysed reaction is Ca(2+)(in) = Ca(2+)(out). The enzyme catalyses Na(+)(in) = Na(+)(out). It catalyses the reaction K(+)(in) = K(+)(out). In terms of biological role, component of N-methyl-D-aspartate (NMDA) receptors (NMDARs) that function as heterotetrameric, ligand-gated cation channels with high calcium permeability and voltage-dependent block by Mg(2+). NMDARs participate in synaptic plasticity for learning and memory formation by contributing to the long-term potentiation (LTP). Channel activation requires binding of the neurotransmitter L-glutamate to the GluN2 subunit, glycine or D-serine binding to the GluN1 subunit, plus membrane depolarization to eliminate channel inhibition by Mg(2+). NMDARs mediate simultaneously the potasium efflux and the influx of calcium and sodium. Each GluN2 or GluN3 subunit confers differential attributes to channel properties, including activation, deactivation and desensitization kinetics, pH sensitivity, Ca2(+) permeability, and binding to allosteric modulators. The GluN3 subunits confer distinctive ion channel activation mechanism, which relies exclusively on glycine and does not involve glutamate. The polypeptide is Glutamate receptor ionotropic, NMDA 1 (Canis lupus familiaris (Dog)).